A 762-amino-acid chain; its full sequence is Coleoptile phototropism protein 1 (762 aa).

The segment covering 1–12 (MWESESESHGGE) has biased composition (basic and acidic residues). The tract at residues 1–29 (MWESESESHGGERGLVPVGGGGGSGRHEA) is disordered. In terms of domain architecture, BTB spans 51-128 (SDLLVKVGDV…SYGMAVDLTA (78 aa)). The segment covering 227-238 (PAAIRGGGGSGG) has biased composition (gly residues). Disordered stretches follow at residues 227–264 (PAAI…RQAV), 460–495 (MAVA…ASAS), 687–718 (QVDG…AWSS), and 731–762 (GADA…NSIS). Positions 268 to 607 (DWWFEDVSVL…VQVLFTEQVK (340 aa)) constitute an NPH3 domain. Residues 654 to 691 (AAAKKDINTLKFELESMKAKYLELQHEMDALQKQVDGR) adopt a coiled-coil conformation. The segment covering 696–709 (PSPAAAKIGKQQQQ) has biased composition (low complexity). Residues 736–747 (AGGGVAPPGGGE) show a composition bias toward gly residues. Positions 752-762 (KGPRRWRNSIS) are enriched in basic residues.

This sequence belongs to the NPH3 family.

The protein operates within protein modification; protein ubiquitination. Functionally, may act as a substrate-specific adapter of an E3 ubiquitin-protein ligase complex (CUL3-RBX1-BTB) which mediates the ubiquitination and subsequent proteasomal degradation of target proteins. Plays a role as signal transduction component in coleoptile phototropism and lateral translocation of auxin. The polypeptide is Coleoptile phototropism protein 1 (CPT1) (Oryza sativa subsp. japonica (Rice)).